The sequence spans 253 residues: Imidazole glycerol phosphate synthase subunit HisF (253 aa).

Active-site residues include Asp11 and Asp130.

The protein belongs to the HisA/HisF family. Heterodimer of HisH and HisF.

The protein resides in the cytoplasm. The catalysed reaction is 5-[(5-phospho-1-deoxy-D-ribulos-1-ylimino)methylamino]-1-(5-phospho-beta-D-ribosyl)imidazole-4-carboxamide + L-glutamine = D-erythro-1-(imidazol-4-yl)glycerol 3-phosphate + 5-amino-1-(5-phospho-beta-D-ribosyl)imidazole-4-carboxamide + L-glutamate + H(+). It participates in amino-acid biosynthesis; L-histidine biosynthesis; L-histidine from 5-phospho-alpha-D-ribose 1-diphosphate: step 5/9. Its function is as follows. IGPS catalyzes the conversion of PRFAR and glutamine to IGP, AICAR and glutamate. The HisF subunit catalyzes the cyclization activity that produces IGP and AICAR from PRFAR using the ammonia provided by the HisH subunit. The protein is Imidazole glycerol phosphate synthase subunit HisF of Myxococcus xanthus (strain DK1622).